The following is a 335-amino-acid chain: Mitochondrial amidoxime reducing component 2 (335 aa).

The N-terminal 35 residues, 1–35, are a transit peptide targeting the mitochondrion; the sequence is MGASSSSALARLGLPARPWPRWLGVAALGLAAVAL. Residues K59, K138, and K144 each participate in a glycyl lysine isopeptide (Lys-Gly) (interchain with G-Cter in ubiquitin) cross-link. N6-acetyllysine; alternate is present on K156. Residue K156 forms a Glycyl lysine isopeptide (Lys-Gly) (interchain with G-Cter in ubiquitin); alternate linkage. Residues K166, K173, K187, K287, and K294 each participate in a glycyl lysine isopeptide (Lys-Gly) (interchain with G-Cter in ubiquitin) cross-link. The region spanning 188–334 is the MOSC domain; it reads GRTSRKLLPT…LRVGDPVYRM (147 aa).

As to quaternary structure, component of a complex composed of cytochrome b5, NADH-cytochrome b5 reductase (CYB5R3) and MTARC2. Mo-molybdopterin serves as cofactor. Post-translationally, ubiquitinated by PRKN during mitophagy, leading to its degradation and enhancement of mitophagy. Deubiquitinated by USP30.

Its subcellular location is the mitochondrion outer membrane. The protein localises to the peroxisome. The catalysed reaction is N(omega)-hydroxy-L-arginine + 2 Fe(II)-[cytochrome b5] + 2 H(+) = L-arginine + 2 Fe(III)-[cytochrome b5] + H2O. In terms of biological role, catalyzes the reduction of N-oxygenated molecules, acting as a counterpart of cytochrome P450 and flavin-containing monooxygenases in metabolic cycles. As a component of prodrug-converting system, reduces a multitude of N-hydroxylated prodrugs particularly amidoximes, leading to increased drug bioavailability. May be involved in mitochondrial N(omega)-hydroxy-L-arginine (NOHA) reduction, regulating endogenous nitric oxide levels and biosynthesis. Postulated to cleave the N-OH bond of N-hydroxylated substrates in concert with electron transfer from NADH to cytochrome b5 reductase then to cytochrome b5, the ultimate electron donor that primes the active site for substrate reduction. The chain is Mitochondrial amidoxime reducing component 2 from Homo sapiens (Human).